We begin with the raw amino-acid sequence, 1818 residues long: U3 small nucleolar RNA-associated protein 10 (1818 aa).

The helical transmembrane segment at 568–588 threads the bilayer; the sequence is TDFYLLIPLILLALFDNSKLI. Residues 1778–1816 form an HEAT repeat; it reads LVPYIAELLEDDDEEVEMEVRRGLVRVIENVLGEPLDRY.

The protein belongs to the HEATR1/UTP10 family. In terms of assembly, component of the ribosomal small subunit (SSU) processome.

It localises to the nucleus. The protein resides in the nucleolus. It is found in the membrane. Its function is as follows. Involved in nucleolar processing of pre-18S ribosomal RNA. Involved in ribosome biosynthesis. The protein is U3 small nucleolar RNA-associated protein 10 of Candida albicans (strain SC5314 / ATCC MYA-2876) (Yeast).